Consider the following 486-residue polypeptide: ATP synthase subunit beta (486 aa).

170-177 contacts ATP; the sequence is GGAGVGKT.

Belongs to the ATPase alpha/beta chains family. F-type ATPases have 2 components, CF(1) - the catalytic core - and CF(0) - the membrane proton channel. CF(1) has five subunits: alpha(3), beta(3), gamma(1), delta(1), epsilon(1). CF(0) has three main subunits: a(1), b(2) and c(9-12). The alpha and beta chains form an alternating ring which encloses part of the gamma chain. CF(1) is attached to CF(0) by a central stalk formed by the gamma and epsilon chains, while a peripheral stalk is formed by the delta and b chains.

It localises to the cell membrane. The catalysed reaction is ATP + H2O + 4 H(+)(in) = ADP + phosphate + 5 H(+)(out). In terms of biological role, produces ATP from ADP in the presence of a proton gradient across the membrane. The catalytic sites are hosted primarily by the beta subunits. The polypeptide is ATP synthase subunit beta (Kineococcus radiotolerans (strain ATCC BAA-149 / DSM 14245 / SRS30216)).